We begin with the raw amino-acid sequence, 217 residues long: Probable cytidylate kinase (217 aa).

9–17 is a binding site for ATP; the sequence is GPAGSGKST.

Belongs to the cytidylate kinase family. Type 1 subfamily.

The enzyme catalyses CMP + ATP = CDP + ADP. It catalyses the reaction dCMP + ATP = dCDP + ADP. This is Probable cytidylate kinase from Vairimorpha ceranae (strain BRL01) (Microsporidian parasite).